The sequence spans 392 residues: Autophagy-related protein 21 (392 aa).

2 WD repeats span residues V200 to P240 and S250 to D289. The short motif at F246–S250 is the L/FRRG motif element.

This sequence belongs to the WD repeat PROPPIN family.

The protein localises to the cytoplasm. It localises to the membrane. It is found in the vacuole membrane. Functionally, required for cytoplasm to vacuole transport (Cvt) vesicles formation and mitophagy. Involved in binding of phosphatidylethanolamine to ATG8 and in recruitment of ATG8 and ATG5 to the pre-autophagosomal structure. Protects ATG8 from ARG4-mediated cleavage. The protein is Autophagy-related protein 21 (ATG21) of Kluyveromyces lactis (strain ATCC 8585 / CBS 2359 / DSM 70799 / NBRC 1267 / NRRL Y-1140 / WM37) (Yeast).